The following is a 272-amino-acid chain: Tail assembly protein Gp25 (272 aa).

A disordered region spans residues 219–272 (NRDPKKPKPKAPKSYPRPDDLEKTTPKPGSFAAMVVRAKKAARERREREEESAE). Basic and acidic residues-rich tracts occupy residues 234-243 (PRPDDLEKTT) and 262-272 (ERREREEESAE).

The protein belongs to the L5likevirus tail assembly protein family. In terms of assembly, interacts with tail assembly protein Gp24 and tape measure protein.

Its function is as follows. Promotes tail assembly by creating a scaffold for the tail tube proteins. The tail assembly proteins Gp24 and Gp25 would wrap the linear tape measure protein to create a tail assembly scaffold. It would allow polymerization of tail tube protein during which Gp24 and Gp25 are released and therefore are absent from the mature virion. The tail assembly protein Gp25 is produced by a rare -1 ribosomal frameshift. The ratio Gp24/Gp25 is important for proper tail assembly. This is Tail assembly protein Gp25 (25) from Mycobacterium phage L5 (Mycobacteriophage L5).